Reading from the N-terminus, the 417-residue chain is Actin-related protein 10 (417 aa).

This sequence belongs to the actin family. In terms of assembly, subunit of dynactin, a multiprotein complex part of a tripartite complex with dynein and a adapter, such as BICDL1, BICD2 or HOOK3. The dynactin complex is built around ACTR1A/ACTB filament and consists of an actin-related filament composed of a shoulder domain, a pointed end and a barbed end. Its length is defined by its flexible shoulder domain. The soulder is composed of 2 DCTN1 subunits, 4 DCTN2 and 2 DCTN3. The 4 DCNT2 (via N-terminus) bind the ACTR1A filament and act as molecular rulers to determine the length. The pointed end is important for binding dynein-dynactin cargo adapters. Consists of 4 subunits: ACTR10, DCNT4, DCTN5 and DCTN6. The barbed end is composed of a CAPZA1:CAPZB heterodimers, which binds ACTR1A/ACTB filament and dynactin and stabilizes dynactin.

The protein localises to the cytoplasm. The protein resides in the cytoskeleton. Part of the dynactin complex that activates the molecular motor dynein for ultra-processive transport along microtubules. This is Actin-related protein 10 (ACTR10) from Sus scrofa (Pig).